Reading from the N-terminus, the 149-residue chain is Nascent polypeptide-associated complex subunit beta-2 (149 aa).

The region spanning 38–103 is the NAC-A/B domain; the sequence is DKDNTKLQAE…PKENTLNGLY (66 aa).

The protein belongs to the NAC-beta family. In terms of assembly, part of the nascent polypeptide-associated complex (NAC), consisting of EGD2 and either EGD1 or BTT1. NAC associates with ribosomes via EGD1 or BTT1.

The protein resides in the cytoplasm. It is found in the nucleus. Acts as a component of the nascent polypeptide-associated complex (NAC), which promotes mitochondrial protein import by enhancing productive ribosome interactions with the outer mitochondrial membrane. Also blocks the inappropriate interaction of ribosomes translating non-secretory nascent polypeptides with translocation sites in the membrane of the endoplasmic reticulum. BTT1 may act as a transcription factor that exert a negative effect on the expression of several genes that are transcribed by RNA polymerase II. The sequence is that of Nascent polypeptide-associated complex subunit beta-2 (BTT1) from Saccharomyces cerevisiae (strain YJM789) (Baker's yeast).